The chain runs to 344 residues: N-acetyl-gamma-glutamyl-phosphate reductase 1 (344 aa).

Residue cysteine 150 is part of the active site.

This sequence belongs to the NAGSA dehydrogenase family. Type 1 subfamily.

It is found in the cytoplasm. It catalyses the reaction N-acetyl-L-glutamate 5-semialdehyde + phosphate + NADP(+) = N-acetyl-L-glutamyl 5-phosphate + NADPH + H(+). It participates in amino-acid biosynthesis; L-arginine biosynthesis; N(2)-acetyl-L-ornithine from L-glutamate: step 3/4. Its function is as follows. Catalyzes the NADPH-dependent reduction of N-acetyl-5-glutamyl phosphate to yield N-acetyl-L-glutamate 5-semialdehyde. This is N-acetyl-gamma-glutamyl-phosphate reductase 1 from Pseudomonas putida (strain ATCC 47054 / DSM 6125 / CFBP 8728 / NCIMB 11950 / KT2440).